The following is a 209-amino-acid chain: Uracil phosphoribosyltransferase (209 aa).

Residues Arg79, Arg104, and 131-139 (DPMLATGGT) contribute to the 5-phospho-alpha-D-ribose 1-diphosphate site. Uracil is bound by residues Ile194 and 199 to 201 (GDA). A 5-phospho-alpha-D-ribose 1-diphosphate-binding site is contributed by Asp200.

It belongs to the UPRTase family. It depends on Mg(2+) as a cofactor.

The enzyme catalyses UMP + diphosphate = 5-phospho-alpha-D-ribose 1-diphosphate + uracil. It participates in pyrimidine metabolism; UMP biosynthesis via salvage pathway; UMP from uracil: step 1/1. Its activity is regulated as follows. Allosterically activated by GTP. Catalyzes the conversion of uracil and 5-phospho-alpha-D-ribose 1-diphosphate (PRPP) to UMP and diphosphate. The polypeptide is Uracil phosphoribosyltransferase (Pseudoalteromonas atlantica (strain T6c / ATCC BAA-1087)).